A 308-amino-acid chain; its full sequence is Ribosomal RNA small subunit methyltransferase H (308 aa).

S-adenosyl-L-methionine contacts are provided by residues 31 to 33, Asp51, Phe75, Asp97, and Gln104; that span reads GGH.

It belongs to the methyltransferase superfamily. RsmH family.

It localises to the cytoplasm. It carries out the reaction cytidine(1402) in 16S rRNA + S-adenosyl-L-methionine = N(4)-methylcytidine(1402) in 16S rRNA + S-adenosyl-L-homocysteine + H(+). Functionally, specifically methylates the N4 position of cytidine in position 1402 (C1402) of 16S rRNA. The chain is Ribosomal RNA small subunit methyltransferase H from Tolumonas auensis (strain DSM 9187 / NBRC 110442 / TA 4).